A 329-amino-acid polypeptide reads, in one-letter code: NAD kinase (329 aa).

The tract at residues 1 to 26 is disordered; it reads MTTPGTDHNADQGADSGDKATKAASG. Residue Asp104 is the Proton acceptor of the active site. Residues 104–105, Arg109, 179–180, Asp209, and 220–225 each bind NAD(+); these read DG, NE, and TAYAFS.

This sequence belongs to the NAD kinase family. Requires a divalent metal cation as cofactor.

It is found in the cytoplasm. The enzyme catalyses NAD(+) + ATP = ADP + NADP(+) + H(+). Its function is as follows. Involved in the regulation of the intracellular balance of NAD and NADP, and is a key enzyme in the biosynthesis of NADP. Catalyzes specifically the phosphorylation on 2'-hydroxyl of the adenosine moiety of NAD to yield NADP. The polypeptide is NAD kinase (Corynebacterium jeikeium (strain K411)).